Consider the following 427-residue polypeptide: Glutamate-1-semialdehyde 2,1-aminomutase (427 aa).

Lys-265 bears the N6-(pyridoxal phosphate)lysine mark.

This sequence belongs to the class-III pyridoxal-phosphate-dependent aminotransferase family. HemL subfamily. In terms of assembly, homodimer. Pyridoxal 5'-phosphate is required as a cofactor.

Its subcellular location is the cytoplasm. The catalysed reaction is (S)-4-amino-5-oxopentanoate = 5-aminolevulinate. The protein operates within porphyrin-containing compound metabolism; protoporphyrin-IX biosynthesis; 5-aminolevulinate from L-glutamyl-tRNA(Glu): step 2/2. The polypeptide is Glutamate-1-semialdehyde 2,1-aminomutase (Paraburkholderia phytofirmans (strain DSM 17436 / LMG 22146 / PsJN) (Burkholderia phytofirmans)).